A 1243-amino-acid chain; its full sequence is Zinc finger protein ZFAT (1243 aa).

Residues 12–35 (FMCKCCNLFSPNQSELLSHVSEKH) form a C2H2-type 1 zinc finger. Disordered regions lie at residues 51–116 (PLST…PSSL) and 147–189 (GEAG…GKEA). Basic residues predominate over residues 70–81 (MKRKRGRPKGST). The C2H2-type 2; degenerate zinc-finger motif lies at 116–141 (LECSKCCRKFSNTRQLRKHICIIVLN). Residues 156-189 (ELEKKCKEDDREKASKRPRSQKTEKVQKISGKEA) are compositionally biased toward basic and acidic residues. C2H2-type zinc fingers lie at residues 271–293 (FTCEYCNKVFKFKHSLQAHLRIH), 299–321 (YKCPQCSYASAIKANLNVHLRKH), 326–349 (FACDYCSFTCLSKGHLKVHIERVH), 354–377 (QHCRFCKKKYSDVKNLIKHIRDAH), 404–426 (YDCHICERKFKNELDRDRHMLVH), 432–454 (FACELCGHGATKYQALELHVRKH), and 458–481 (YVCAVCRKKFVSSIRLRTHIKEVH). Residues Cys273, Cys276, His289, His293, Cys301, Cys304, His317, His321, Cys328, Cys331, His344, His349, Cys356, Cys359, His372, His377, Cys406, Cys409, His422, and His426 each coordinate Zn(2+). Zn(2+)-binding residues include Cys460, Cys463, His476, and His481. Disordered stretches follow at residues 534-570 (EACPGDTQLEEGRKEPEAPGEMPAPAVHLASPQAEST), 603-625 (TSSAEAHAAPEKPPDMQHRSSVQ), and 638-705 (AQSA…CKAA). Residues 610-620 (AAPEKPPDMQH) are compositionally biased toward basic and acidic residues. Positions 638 to 650 (AQSAGSDQESHGA) are enriched in polar residues. 10 C2H2-type zinc fingers span residues 742 to 764 (LECEYCGKLFWYQVHFDMHVRTH), 770 to 793 (YYCSQCHYSSITKNCLKRHVIQKH), 798 to 822 (LKCPTDGCDYSTPDKYKLQAHLKVH), 830 to 853 (YSCPVCEKSFSEDRLIKSHIKTNH), 880 to 903 (MKCPYCDFYFMKNGSDLQRHIWAH), 909 to 931 (FKCSLCEYATRSKSNLKAHMNRH), 937 to 959 (HLCDMCGKKFKSKGTLKSHKLLH), 966 to 988 (FKCTVCDYTAAQKPQLLRHMEQH), 994 to 1017 (FRCAHCHYSCNISGSLKRHYNRKH), and 1041 to 1064 (LKCPVCSFVYGTKWEFNRHLKNKH). The Zn(2+) site is built by Cys772, Cys775, His788, His793, Cys800, Cys805, His818, His822, Cys832, Cys835, His848, His853, Cys882, Cys885, His899, His903, Cys911, Cys914, His927, His931, Cys939, Cys942, His955, and Leu958.

In terms of tissue distribution, isoform 1 is strongly expressed in placenta, spleen, kidney, testis and peripheral blood leukocytes. Expressed in CD4+ and CD8+ T-cells, CD19+ B-cells and CB14+ monocytes. Isoform 3 is strongly expressed in placenta, ovary, tonsil, CD19+ B-cells and CD14+ monocytes.

It localises to the nucleus. It is found in the cytoplasm. Its subcellular location is the cytosol. Its function is as follows. May be involved in transcriptional regulation. Overexpression causes down-regulation of a number of genes involved in the immune response. Some genes are also up-regulated. The polypeptide is Zinc finger protein ZFAT (ZFAT) (Homo sapiens (Human)).